A 226-amino-acid polypeptide reads, in one-letter code: Urease accessory protein UreF (226 aa).

This sequence belongs to the UreF family. In terms of assembly, ureD, UreF and UreG form a complex that acts as a GTP-hydrolysis-dependent molecular chaperone, activating the urease apoprotein by helping to assemble the nickel containing metallocenter of UreC. The UreE protein probably delivers the nickel.

It is found in the cytoplasm. Its function is as follows. Required for maturation of urease via the functional incorporation of the urease nickel metallocenter. The protein is Urease accessory protein UreF of Nitrosospira multiformis (strain ATCC 25196 / NCIMB 11849 / C 71).